The primary structure comprises 192 residues: Amelogenin, Y isoform (192 aa).

Positions 1–16 (MGTWILFACLLGAAYS) are cleaved as a signal peptide. A disordered region spans residues 73–192 (QSPQNHALQP…TDKTKREEVD (120 aa)). Over residues 87–105 (PMVPAQQPVVPQQPMMPVP) the composition is skewed to low complexity. Polar residues predominate over residues 108-117 (HSMTPIQHHQ). Positions 132–173 (PIQPQPHQPLQPQPPVHPIQRLPPQPPLPPIFPMQPLPPVLP) are enriched in pro residues.

Belongs to the amelogenin family.

Its subcellular location is the secreted. The protein resides in the extracellular space. It is found in the extracellular matrix. In terms of biological role, plays a role in the biomineralization of teeth. Seems to regulate the formation of crystallites during the secretory stage of tooth enamel development. Thought to play a major role in the structural organization and mineralization of developing enamel. This is Amelogenin, Y isoform (AMELY) from Bos taurus (Bovine).